The chain runs to 697 residues: Semaphorin-2A (697 aa).

The N-terminal stretch at methionine 1–serine 20 is a signal peptide. The Sema domain maps to valine 21 to leucine 493. 2 N-linked (GlcNAc...) asparagine glycosylation sites follow: asparagine 63 and asparagine 66. Residues cysteine 87 and cysteine 98 are joined by a disulfide bond. Asparagine 132, asparagine 198, and asparagine 283 each carry an N-linked (GlcNAc...) asparagine glycan. 2 cysteine pairs are disulfide-bonded: cysteine 260-cysteine 367 and cysteine 284-cysteine 326. An N-linked (GlcNAc...) asparagine glycan is attached at asparagine 369. 2 cysteine pairs are disulfide-bonded: cysteine 496–cysteine 512 and cysteine 506–cysteine 521. Positions proline 526 to alanine 634 constitute an Ig-like C2-type domain. Asparagine 534, asparagine 629, and asparagine 679 each carry an N-linked (GlcNAc...) asparagine glycan. An intrachain disulfide couples cysteine 618 to cysteine 654. A compositionally biased stretch (polar residues) spans glutamine 673–threonine 685. The tract at residues glutamine 673 to alanine 697 is disordered.

It belongs to the semaphorin family. In terms of tissue distribution, expressed in a gradient in the developing limb bud epithelium during Ti pioneer axon outgrowth.

The protein localises to the secreted. Its function is as follows. Acts as a chemorepulsive guidance molecule critical for axon fasciculation and for determining both the initial direction and subsequent pathfinding events of the Ti axon projection. This Schistocerca gregaria (Desert locust) protein is Semaphorin-2A (SEMA-2A).